A 450-amino-acid chain; its full sequence is Probable ECA polymerase (450 aa).

The next 11 helical transmembrane spans lie at 6 to 26, 37 to 57, 63 to 83, 118 to 138, 155 to 175, 181 to 201, 207 to 227, 228 to 248, 341 to 361, 378 to 398, and 410 to 430; these read FSGL…LTWF, VFFS…TSVL, VGVA…CFYA, VILM…NGFL, GVAL…VYFL, AWLF…MIVG, IIIA…ISLW, MLAA…LKRY, LVVM…GLII, YKAA…IVLA, and VFFI…YWLF.

The protein belongs to the WzyE family. As to quaternary structure, probably part of a complex composed of WzxE, WzyE and WzzE.

The protein resides in the cell inner membrane. It functions in the pathway bacterial outer membrane biogenesis; enterobacterial common antigen biosynthesis. Functionally, probably involved in the polymerization of enterobacterial common antigen (ECA) trisaccharide repeat units. This Shigella flexneri protein is Probable ECA polymerase.